A 32-amino-acid chain; its full sequence is Acyclotide phyb-M (32 aa).

Gln-1 bears the Pyrrolidone carboxylic acid mark. Cystine bridges form between Cys-5–Cys-21, Cys-9–Cys-23, and Cys-14–Cys-28.

Contains 3 disulfide bonds. As to expression, expressed in midvein, lamina and periphery of leaves (at protein level).

In terms of biological role, probably participates in a plant defense mechanism. The protein is Acyclotide phyb-M of Petunia hybrida (Petunia).